A 328-amino-acid chain; its full sequence is NADH-cytochrome b5 reductase-like protein (328 aa).

One can recognise an FAD-binding FR-type domain in the interval 76–184 (DKWLEFKLQD…KGPVEKFKYS (109 aa)). T201 is subject to Phosphothreonine.

It belongs to the flavoprotein pyridine nucleotide cytochrome reductase family. The cofactor is FAD.

The protein resides in the mitochondrion. The enzyme catalyses 2 Fe(III)-[cytochrome b5] + NADH = 2 Fe(II)-[cytochrome b5] + NAD(+) + H(+). In terms of biological role, desaturation and elongation of fatty acids. The polypeptide is NADH-cytochrome b5 reductase-like protein (CBR2) (Arabidopsis thaliana (Mouse-ear cress)).